A 172-amino-acid polypeptide reads, in one-letter code: 3-hydroxydecanoyl-[acyl-carrier-protein] dehydratase (172 aa).

The active site involves His71.

It belongs to the thioester dehydratase family. FabA subfamily. Homodimer.

It localises to the cytoplasm. It catalyses the reaction a (3R)-hydroxyacyl-[ACP] = a (2E)-enoyl-[ACP] + H2O. The catalysed reaction is (3R)-hydroxydecanoyl-[ACP] = (2E)-decenoyl-[ACP] + H2O. It carries out the reaction (2E)-decenoyl-[ACP] = (3Z)-decenoyl-[ACP]. It functions in the pathway lipid metabolism; fatty acid biosynthesis. Functionally, necessary for the introduction of cis unsaturation into fatty acids. Catalyzes the dehydration of (3R)-3-hydroxydecanoyl-ACP to E-(2)-decenoyl-ACP and then its isomerization to Z-(3)-decenoyl-ACP. Can catalyze the dehydratase reaction for beta-hydroxyacyl-ACPs with saturated chain lengths up to 16:0, being most active on intermediate chain length. In Maricaulis maris (strain MCS10) (Caulobacter maris), this protein is 3-hydroxydecanoyl-[acyl-carrier-protein] dehydratase.